A 129-amino-acid polypeptide reads, in one-letter code: Lysozyme C (129 aa).

The C-type lysozyme domain occupies 1-129 (KIYTRCELAA…VSKWIKDCKL (129 aa)). 4 disulfides stabilise this stretch: cysteine 6–cysteine 127, cysteine 30–cysteine 115, cysteine 64–cysteine 80, and cysteine 76–cysteine 94. Catalysis depends on residues glutamate 35 and aspartate 52.

It belongs to the glycosyl hydrolase 22 family. As to quaternary structure, monomer.

The protein resides in the secreted. The catalysed reaction is Hydrolysis of (1-&gt;4)-beta-linkages between N-acetylmuramic acid and N-acetyl-D-glucosamine residues in a peptidoglycan and between N-acetyl-D-glucosamine residues in chitodextrins.. Lysozymes have primarily a bacteriolytic function; those in tissues and body fluids are associated with the monocyte-macrophage system and enhance the activity of immunoagents. The protein is Lysozyme C (LYZ) of Crax fasciolata (Bare-faced curassow).